We begin with the raw amino-acid sequence, 300 residues long: Aspartate carbamoyltransferase catalytic subunit (300 aa).

Residues arginine 54 and threonine 55 each contribute to the carbamoyl phosphate site. Lysine 82 contributes to the L-aspartate binding site. Residues arginine 104, histidine 131, and glutamine 134 each coordinate carbamoyl phosphate. Residues arginine 164 and arginine 213 each contribute to the L-aspartate site. 2 residues coordinate carbamoyl phosphate: alanine 256 and proline 257.

This sequence belongs to the aspartate/ornithine carbamoyltransferase superfamily. ATCase family. Heterododecamer (2C3:3R2) of six catalytic PyrB chains organized as two trimers (C3), and six regulatory PyrI chains organized as three dimers (R2).

The catalysed reaction is carbamoyl phosphate + L-aspartate = N-carbamoyl-L-aspartate + phosphate + H(+). Its pathway is pyrimidine metabolism; UMP biosynthesis via de novo pathway; (S)-dihydroorotate from bicarbonate: step 2/3. In terms of biological role, catalyzes the condensation of carbamoyl phosphate and aspartate to form carbamoyl aspartate and inorganic phosphate, the committed step in the de novo pyrimidine nucleotide biosynthesis pathway. The sequence is that of Aspartate carbamoyltransferase catalytic subunit from Malacoplasma penetrans (strain HF-2) (Mycoplasma penetrans).